A 218-amino-acid polypeptide reads, in one-letter code: Putative receptor like protein 25 (218 aa).

Residues 1–178 are Extracellular-facing; that stretch reads MIYTKNAYGS…QEDAKVLNWK (178 aa). LRR repeat units lie at residues 34–58, 59–82, 83–106, and 108–131; these read LTLYSAIDFSGNRLEGQIPESIGLL, KALIALNLSNNAFIGNIPMSMANL, IELESLDMSRNGLSGTIPQGLKTL, and FLGYINVSHNQLKGEIPQGTQITG. N-linked (GlcNAc...) asparagine glycosylation is present at Asn-65. An N-linked (GlcNAc...) asparagine glycan is attached at Asn-113. Residues 179–199 form a helical membrane-spanning segment; it reads AVATGYGPGVFFGLAIAQIIA. Over 200-218 the chain is Cytoplasmic; sequence SYKPEWLVKIIGPNKRRNH.

The protein belongs to the RLP family.

The protein localises to the cell membrane. This Arabidopsis thaliana (Mouse-ear cress) protein is Putative receptor like protein 25.